Here is a 165-residue protein sequence, read N- to C-terminus: Thiol peroxidase (165 aa).

The 148-residue stretch at 18-165 folds into the Thioredoxin domain; the sequence is PQKGAQAPAF…PNYAAALAAL (148 aa). Cys-60 functions as the Cysteine sulfenic acid (-SOH) intermediate in the catalytic mechanism. An intrachain disulfide couples Cys-60 to Cys-94.

It belongs to the peroxiredoxin family. Tpx subfamily. In terms of assembly, homodimer.

The catalysed reaction is a hydroperoxide + [thioredoxin]-dithiol = an alcohol + [thioredoxin]-disulfide + H2O. Functionally, thiol-specific peroxidase that catalyzes the reduction of hydrogen peroxide and organic hydroperoxides to water and alcohols, respectively. Plays a role in cell protection against oxidative stress by detoxifying peroxides. The chain is Thiol peroxidase from Pseudomonas aeruginosa (strain ATCC 15692 / DSM 22644 / CIP 104116 / JCM 14847 / LMG 12228 / 1C / PRS 101 / PAO1).